Reading from the N-terminus, the 314-residue chain is Putative S-adenosyl-L-methionine-dependent methyltransferase MAP_4191c (314 aa).

S-adenosyl-L-methionine is bound by residues aspartate 138 and 167–168; that span reads DL.

Belongs to the UPF0677 family.

Exhibits S-adenosyl-L-methionine-dependent methyltransferase activity. The sequence is that of Putative S-adenosyl-L-methionine-dependent methyltransferase MAP_4191c from Mycolicibacterium paratuberculosis (strain ATCC BAA-968 / K-10) (Mycobacterium paratuberculosis).